The following is a 331-amino-acid chain: Pseudouridylate synthase TRUB2, mitochondrial (331 aa).

Aspartate 98 acts as the Nucleophile in catalysis. Residues 309 to 331 are disordered; sequence STGQPWGLKDPSSTLELESCSGQ. A compositionally biased stretch (polar residues) spans 319–331; sequence PSSTLELESCSGQ.

The protein belongs to the pseudouridine synthase TruB family. Forms a regulatory protein-RNA complex, consisting of RCC1L, NGRN, RPUSD3, RPUSD4, TRUB2, FASTKD2 and 16S mt-rRNA.

It localises to the mitochondrion matrix. The enzyme catalyses a uridine in mRNA = a pseudouridine in mRNA. It catalyses the reaction uridine(55) in tRNA = pseudouridine(55) in tRNA. Minor enzyme contributing to the isomerization of uridine to pseudouridine (pseudouridylation) of specific mitochondrial mRNAs (mt-mRNAs) such as COXI and COXIII mt-mRNAs. As a component of a functional protein-RNA module, consisting of RCC1L, NGRN, RPUSD3, RPUSD4, TRUB2, FASTKD2 and 16S mitochondrial ribosomal RNA (16S mt-rRNA), controls 16S mt-rRNA abundance and is required for intra-mitochondrial translation. Also catalyzes pseudouridylation of some tRNAs, including synthesis of pseudouridine(55) from uracil-55, in the psi GC loop of a subset of tRNAs. This Mus musculus (Mouse) protein is Pseudouridylate synthase TRUB2, mitochondrial.